The following is a 406-amino-acid chain: NADH-ubiquinone oxidoreductase 49 kDa subunit (406 aa).

This sequence belongs to the complex I 49 kDa subunit family. As to quaternary structure, complex I is composed of 45 different subunits. Component of the iron-sulfur (IP) fragment of the enzyme.

Its subcellular location is the mitochondrion inner membrane. The catalysed reaction is a ubiquinone + NADH + 5 H(+)(in) = a ubiquinol + NAD(+) + 4 H(+)(out). Its function is as follows. Core subunit of the mitochondrial membrane respiratory chain NADH dehydrogenase (Complex I) that is believed to belong to the minimal assembly required for catalysis. Complex I functions in the transfer of electrons from NADH to the respiratory chain. The immediate electron acceptor for the enzyme is believed to be ubiquinone. This is NADH-ubiquinone oxidoreductase 49 kDa subunit (nad7) from Dictyostelium citrinum (Slime mold).